A 1286-amino-acid chain; its full sequence is DNA-directed RNA polymerase 147 kDa polypeptide (1286 aa).

The protein belongs to the poxviridae DNA-directed RNA polymerase 147 kDa subunit family. The DNA-dependent RNA polymerase used for intermediate and late genes expression consists of eight subunits Rpo30/OPG66, Rpo7/OPG90, Rpo22/OPG103, Rpo147/OPG105, Rpo18/OPG119, Rpo19/OPG131, Rpo132/OPG151 and Rpo35/OPG156. The same holoenzyme, with the addition of the transcription-specificity factor OPG109, is used for early gene expression.

It is found in the virion. The enzyme catalyses RNA(n) + a ribonucleoside 5'-triphosphate = RNA(n+1) + diphosphate. Its function is as follows. Part of the DNA-dependent RNA polymerase which catalyzes the transcription of viral DNA into RNA using the four ribonucleoside triphosphates as substrates. Responsible for the transcription of early, intermediate and late genes. DNA-dependent RNA polymerase associates with the early transcription factor (ETF), itself composed of OPG118 and OPG133, thereby allowing the early genes transcription. Late transcription, and probably also intermediate transcription, require newly synthesized RNA polymerase. The polypeptide is DNA-directed RNA polymerase 147 kDa polypeptide (OPG105) (Monkeypox virus).